Here is a 37-residue protein sequence, read N- to C-terminus: Cytochrome b6-f complex subunit 5 (37 aa).

The chain crosses the membrane as a helical span at residues 5–25; that stretch reads LPSGIVLGLIPITLAGLFVTA.

The protein belongs to the PetG family. As to quaternary structure, the 4 large subunits of the cytochrome b6-f complex are cytochrome b6, subunit IV (17 kDa polypeptide, PetD), cytochrome f and the Rieske protein, while the 4 small subunits are PetG, PetL, PetM and PetN. The complex functions as a dimer.

Its subcellular location is the plastid. The protein localises to the chloroplast thylakoid membrane. Component of the cytochrome b6-f complex, which mediates electron transfer between photosystem II (PSII) and photosystem I (PSI), cyclic electron flow around PSI, and state transitions. PetG is required for either the stability or assembly of the cytochrome b6-f complex. In Pinus thunbergii (Japanese black pine), this protein is Cytochrome b6-f complex subunit 5.